The following is a 223-amino-acid chain: N-terminal Xaa-Pro-Lys N-methyltransferase 1 (223 aa).

M1 bears the N-acetylmethionine mark. T2 is subject to N-acetylthreonine; in N-terminal Xaa-Pro-Lys N-methyltransferase 1, N-terminally processed. Residues G69, R74, 91–93 (DVT), 119–120 (LQ), and Q135 contribute to the S-adenosyl-L-methionine site.

This sequence belongs to the methyltransferase superfamily. NTM1 family.

It localises to the nucleus. It catalyses the reaction N-terminal L-alanyl-L-prolyl-L-lysyl-[protein] + 3 S-adenosyl-L-methionine = N-terminal N,N,N-trimethyl-L-alanyl-L-prolyl-L-lysyl-[protein] + 3 S-adenosyl-L-homocysteine + 3 H(+). It carries out the reaction N-terminal L-seryl-L-prolyl-L-lysyl-[protein] + 3 S-adenosyl-L-methionine = N-terminal N,N,N-trimethyl-L-seryl-L-prolyl-L-lysyl-[protein] + 3 S-adenosyl-L-homocysteine + 3 H(+). The enzyme catalyses N-terminal L-prolyl-L-prolyl-L-lysyl-[protein] + 2 S-adenosyl-L-methionine = N-terminal N,N-dimethyl-L-prolyl-L-prolyl-L-lysyl-[protein] + 2 S-adenosyl-L-homocysteine + 2 H(+). Functionally, distributive alpha-N-methyltransferase that methylates the N-terminus of target proteins containing the N-terminal motif [Ala/Gly/Pro/Ser]-Pro-Lys when the initiator Met is cleaved. Specifically catalyzes mono-, di- or tri-methylation of the exposed alpha-amino group of the Ala, Gly or Ser residue in the [Ala/Gly/Ser]-Pro-Lys motif and mono- or di-methylation of Pro in the Pro-Pro-Lys motif. Some of the substrates may be primed by NTMT2-mediated monomethylation. Catalyzes the trimethylation of the N-terminal Gly in CENPA (after removal of Met-1). Responsible for the N-terminal methylation of KLHL31, MYL2, MYL3, RB1, RCC1, RPL23A and SET. Required during mitosis for normal bipolar spindle formation and chromosome segregation via its action on RCC1. The protein is N-terminal Xaa-Pro-Lys N-methyltransferase 1 (Ntmt1) of Mus musculus (Mouse).